The primary structure comprises 404 residues: Lysophospholipid transporter LplT (404 aa).

Helical transmembrane passes span 16–36 (MIAVLCAQFFSAFGDNALLFA), 53–73 (ILQMAFVATYIVLAPFVGQFA), 91–111 (AGALVICFGFNPFLGYSLVGV), 139–159 (MMEASTIAAILLGSVAGGVLA), 164–184 (GVALGVCALVYAIAVVANMFI), 195–213 (SWRPRAMTGSFFTACLVLW), 227–247 (LFWGAGVTLRFLLVLWVPIAL), 253–273 (ATPTLLNAMVAIGIVVGAGAA), 285–305 (CLPAGVLIGVAVAIFALQHSM), 310–330 (LLLIIIGILGGFFVVPLNALL), 350–370 (GENTAMLLMLGLFSVVVKLGV), and 372–392 (VIAVGVGFGVIFALAIALLWG).

The protein belongs to the major facilitator superfamily. LplT (TC 2.A.1.42) family.

The protein localises to the cell inner membrane. Catalyzes the facilitated diffusion of 2-acyl-glycero-3-phosphoethanolamine (2-acyl-GPE) into the cell. The polypeptide is Lysophospholipid transporter LplT (Yersinia enterocolitica serotype O:8 / biotype 1B (strain NCTC 13174 / 8081)).